Here is a 74-residue protein sequence, read N- to C-terminus: Protein SlyX homolog (74 aa).

This sequence belongs to the SlyX family.

The sequence is that of Protein SlyX homolog from Aliivibrio fischeri (strain ATCC 700601 / ES114) (Vibrio fischeri).